Reading from the N-terminus, the 483-residue chain is Isocitrate dehydrogenase [NADP] (483 aa).

T74 is a binding site for NADP(+). The D-threo-isocitrate site is built by S83, N85, R89, R99, and R121. D232 contacts Mg(2+). NADP(+) contacts are provided by residues 264–270 and N277; that span reads HGSAPDI.

The protein belongs to the isocitrate and isopropylmalate dehydrogenases family. In terms of assembly, homodimer. The cofactor is Mg(2+). Requires Mn(2+) as cofactor.

The enzyme catalyses D-threo-isocitrate + NADP(+) = 2-oxoglutarate + CO2 + NADPH. Catalyzes the oxidative decarboxylation of isocitrate to 2-oxoglutarate and carbon dioxide with the concomitant reduction of NADP(+). This Rickettsia prowazekii (strain Madrid E) protein is Isocitrate dehydrogenase [NADP] (icd).